Consider the following 217-residue polypeptide: Large ribosomal subunit protein uL29m (217 aa).

This sequence belongs to the universal ribosomal protein uL29 family. Component of the mitochondrial large ribosomal subunit. Mature mitochondrial ribosomes consist of a small (37S) and a large (54S) subunit. The 37S subunit contains at least 33 different proteins and 1 molecule of RNA (15S). The 54S subunit contains at least 45 different proteins and 1 molecule of RNA (21S).

The protein resides in the mitochondrion. In Aspergillus fumigatus (strain ATCC MYA-4609 / CBS 101355 / FGSC A1100 / Af293) (Neosartorya fumigata), this protein is Large ribosomal subunit protein uL29m (mrpl4).